We begin with the raw amino-acid sequence, 118 residues long: Large ribosomal subunit protein bL19 (118 aa).

The protein belongs to the bacterial ribosomal protein bL19 family.

Functionally, this protein is located at the 30S-50S ribosomal subunit interface and may play a role in the structure and function of the aminoacyl-tRNA binding site. The chain is Large ribosomal subunit protein bL19 from Frankia alni (strain DSM 45986 / CECT 9034 / ACN14a).